Consider the following 299-residue polypeptide: Junctional adhesion molecule A (299 aa).

Positions 1–27 (MGTKAQVERKLLCLFILAILLCSLALG) are cleaved as a signal peptide. 2 Ig-like V-type domains span residues 28 to 125 (SVTV…VKVK) and 135 to 228 (PTVN…NAVR). The Extracellular portion of the chain corresponds to 28–238 (SVTVHSSEPE…MEAVERNVGV (211 aa)). 2 disulfide bridges follow: Cys-50-Cys-109 and Cys-153-Cys-212. N-linked (GlcNAc...) asparagine glycosylation occurs at Asn-185. The chain crosses the membrane as a helical span at residues 239-259 (IVAAVLVTLILLGILVFGIWF). Residues 260–299 (AYSRGHFDRTKKGTSSKKVIYSQPSARSEGEFKQTSSFLV) are Cytoplasmic-facing. A phosphoserine mark is found at Ser-281, Ser-284, and Ser-287.

This sequence belongs to the immunoglobulin superfamily. In terms of assembly, interacts with the ninth PDZ domain of MPDZ. Interacts with the first PDZ domain of PARD3. The association between PARD3 and PARD6B probably disrupts this interaction. Interacts with ITGAL (via I-domain). Interacts with CD151. (Microbial infection) Interacts with Mammalian reovirus sigma-1 capsid protein. As to quaternary structure, (Microbial infection) Interacts with Human Rotavirus strain Wa vp4 capsid protein. Post-translationally, N-glycosylated. (Microbial infection) Cleaved by H.pylori virulence factor PqqE. Cleavage leads to altered tight junction functions. As to expression, expressed in endothelium, epithelium and leukocytes (at protein level).

The protein localises to the cell junction. Its subcellular location is the tight junction. It localises to the cell membrane. Its function is as follows. Seems to play a role in epithelial tight junction formation. Appears early in primordial forms of cell junctions and recruits PARD3. The association of the PARD6-PARD3 complex may prevent the interaction of PARD3 with JAM1, thereby preventing tight junction assembly. Plays a role in regulating monocyte transmigration involved in integrity of epithelial barrier. Ligand for integrin alpha-L/beta-2 involved in memory T-cell and neutrophil transmigration. Involved in platelet activation. Functionally, (Microbial infection) Acts as a receptor for Mammalian reovirus sigma-1. (Microbial infection) Acts as a receptor for Human Rotavirus strain Wa. This chain is Junctional adhesion molecule A (F11R), found in Homo sapiens (Human).